The primary structure comprises 113 residues: Sperm-associated antigen 11B (113 aa).

Residues 1-26 (MIPRLLPFFASLLFAALLFPGLSNAS) form the signal peptide. 3 disulfides stabilise this stretch: Cys80/Cys108, Cys87/Cys101, and Cys91/Cys109.

Belongs to the beta-defensin family.

Its subcellular location is the secreted. Functionally, has antimicrobial activity against E.coli. Plays a role in the defense response in the male reproductive tract, contributing to sperm maturation, storage and protection. The protein is Sperm-associated antigen 11B of Mus musculus (Mouse).